Reading from the N-terminus, the 107-residue chain is Sperm protamine P1 (107 aa).

2 stretches are compositionally biased toward basic and acidic residues: residues 1–10 (ALRKVDRNRF) and 20–33 (REAKRYKEEEEFPG). A propeptide spans 1 to 35 (ALRKVDRNRFVLDNVTPQPREAKRYKEEEEFPGHG) (removed in mature form). A disordered region spans residues 1–107 (ALRKVDRNRF…RRRRRGKKGK (107 aa)). Residues 34–107 (HGRRRRRRSK…RRRRRGKKGK (74 aa)) show a composition bias toward basic residues. Residue Ser42 is modified to Phosphoserine.

Post-translationally, a series of N-terminal cleavages yield the mature protein. Only the mature protein is phosphorylated. In terms of tissue distribution, gonads.

It is found in the nucleus. Its subcellular location is the chromosome. Functionally, protamines substitute for histones in the chromatin of sperm during the haploid phase of spermatogenesis. They compact sperm DNA into a highly condensed, stable and inactive complex. The polypeptide is Sperm protamine P1 (Bolinus brandaris (Purple dye murex)).